Here is a 430-residue protein sequence, read N- to C-terminus: T-kininogen 2 (430 aa).

An N-terminal signal peptide occupies residues 1-18 (MKLITILLLCSRLLPSLA). The residue at position 19 (Gln-19) is a Pyrrolidone carboxylic acid. Positions 28 to 131 (CNDETVFQAV…TQICNITPGK (104 aa)) constitute a Cystatin kininogen-type 1 domain. 9 disulfides stabilise this stretch: Cys-28–Cys-404, Cys-83–Cys-94, Cys-107–Cys-125, Cys-141–Cys-144, Cys-205–Cys-217, Cys-228–Cys-247, Cys-263–Cys-266, Cys-327–Cys-339, and Cys-350–Cys-369. Asn-82 carries N-linked (GlcNAc...) asparagine glycosylation. In terms of domain architecture, Cystatin kininogen-type 2 spans 150–253 (MDSSDLKPVL…SQSCDLYPGD (104 aa)). 2 N-linked (GlcNAc...) asparagine glycosylation sites follow: Asn-168 and Asn-204. Positions 272–375 (VDSPELKEAL…TVRCQALDMM (104 aa)) constitute a Cystatin kininogen-type 3 domain. N-linked (GlcNAc...) asparagine glycosylation is present at Asn-326. The interval 410–430 (LSKAGAGPAPDHQAEASTVTP) is disordered.

In terms of processing, as T-kinin is preceded by a Met instead of an Arg or Lys, it is not released from its precursor by either tissue or plasma kallikrein. As to expression, plasma.

The protein localises to the secreted. It is found in the extracellular space. Kininogens are plasma glycoproteins with a number of functions: (1) as precursor of the active peptide bradykinin they effect smooth muscle contraction, induction of hypotension and increase of vascular permeability. (2) They play a role in blood coagulation by helping to position optimally prekallikrein and factor XI next to factor XII. (3) They are inhibitor of thiol proteases. The polypeptide is T-kininogen 2 (Rattus norvegicus (Rat)).